A 311-amino-acid chain; its full sequence is Olfactory receptor 5M8 (311 aa).

The Extracellular segment spans residues 1–24 (MRRNCTLVTEFILLGLTSRRELQI). N4 carries N-linked (GlcNAc...) asparagine glycosylation. A helical transmembrane segment spans residues 25–45 (LLFTLFLAIYMVTVAGNLGMI). Residues 46-53 (VLIQANAW) lie on the Cytoplasmic side of the membrane. The helical transmembrane segment at 54–74 (LHMPMYFFLSHLSFVDLCFSS) threads the bilayer. Topologically, residues 75–98 (NVTPKMLEIFLSEKKSISYPACLV) are extracellular. C96 and C188 are disulfide-bonded. Residues 99–119 (QCYLFIALVHVEIYILAVMAF) form a helical membrane-spanning segment. Residues 120–138 (DRYMAICNPLLYGSRMSKS) are Cytoplasmic-facing. A helical membrane pass occupies residues 139 to 159 (VCSFLITVPYVYGALTGLMET). Topologically, residues 160-195 (MWTYNLAFCGPNEINHFYCADPPLIKLACSDTYNKE) are extracellular. The helical transmembrane segment at 196–216 (LSMFIVAGWNLSFSLFIICIS) threads the bilayer. At 217–236 (YLYIFPAILKIRSTEGRQKA) the chain is on the cytoplasmic side. The helical transmembrane segment at 237 to 257 (FSTCGSHLTAVTIFYATLFFM) threads the bilayer. Topologically, residues 258–270 (YLRPPSKESVEQG) are extracellular. Residues 271–291 (KMVAVFYTTVIPMLNLIIYSL) traverse the membrane as a helical segment. At 292–311 (RNKNVKEALIKELSMKIYFS) the chain is on the cytoplasmic side.

Belongs to the G-protein coupled receptor 1 family.

It localises to the cell membrane. Functionally, odorant receptor. The chain is Olfactory receptor 5M8 (OR5M8) from Homo sapiens (Human).